The sequence spans 1211 residues: Endoplasmic reticulum transmembrane helix translocase (1211 aa).

Residues 1–23 (MGSKALITSPDISSGQLYIKLPT) are Cytoplasmic-facing. A helical membrane pass occupies residues 24–44 (FFHLYVWPFALFVYPYIGYVY). At 45–54 (QNKLYSEEVR) the chain is on the lumenal side. The chain crosses the membrane as a helical span at residues 55–75 (YLTYIAVGTIHALFWLAGEWN). Topologically, residues 76–191 (TKVYCLMTCR…FDIPIPTFGT (116 aa)) are cytoplasmic. Positions 155–185 (TIGTLKKSTGLTNIQSEIFLYRYGKNCFDIP) are A-domain; part 1. Residues 192–212 (LFKEHAVAPFFVFQIFCCVLW) traverse the membrane as a helical segment. The Lumenal segment spans residues 213-216 (CLDD). The chain crosses the membrane as a helical span at residues 217–237 (YWYFSLFSMFMIIALECSVVW). Residues 238–397 (QRQRTLTEFR…EKVTANNRES (160 aa)) are Cytoplasmic-facing. An A-domain; part 2 region spans residues 250–388 (SIKPYEIQVY…LVRTMVFSSE (139 aa)). Residues 398–418 (LYFILFLLVFAIAASGYVWHV) traverse the membrane as a helical segment. The Lumenal portion of the chain corresponds to 419-1057 (GSKTERSRYK…KERPQAGIFN (639 aa)). Residues 464–493 (YIYCTEPFRIPLSGHLDICCFDKTGTLTEE) are P-domain; part 1. Asp485 (4-aspartylphosphate intermediate) is an active-site residue. Mg(2+) is bound by residues Asp485 and Thr487. ATP is bound by residues 485-487 (DKT), Phe587, Arg644, Asp710, and 824-828 (DGTND). The interval 495–685 (MVVQGIAGVN…FAGFLIFTSP (191 aa)) is N-domain. Positions 688 to 845 (EDARQTVQML…HVGVALLNAS (158 aa)) are P-domain; part 2. Residue Asp824 participates in Mg(2+) binding. Residues 846-955 (EEDMLEMQER…NASDDEAPKL (110 aa)) are arm-like. The P-domain; part 3 stretch occupies residues 956–971 (KLGDASVAAPFTSKLA). Residues 1058–1078 (TYIIGSVLGQFAIHIVTLIYI) traverse the membrane as a helical segment. Residues 1079–1100 (TRVVYLYEDPLEKVDLEETFKP) lie on the Cytoplasmic side of the membrane. The helical transmembrane segment at 1101–1121 (SLLNTAIYLLQLIQQVSTFAI) threads the bilayer. The Lumenal segment spans residues 1122–1136 (NYQGRPFREALSENK). The helical transmembrane segment at 1137–1157 (GMYYGLLGIAFVAIAGVTEFS) threads the bilayer. The Cytoplasmic portion of the chain corresponds to 1158 to 1174 (PELNAKLQLVKMAYNFQ). The chain crosses the membrane as a helical span at residues 1175–1195 (IQLLATMVVDYAACWIIEELM). Residues 1196-1211 (KKYFRDNKPKEIVLRN) are Lumenal-facing.

It belongs to the cation transport ATPase (P-type) (TC 3.A.3) family. Type V subfamily. It depends on Mg(2+) as a cofactor.

It localises to the endoplasmic reticulum membrane. The catalysed reaction is [protein]-with a C-terminal TM segment(out) + ATP + H2O = [protein]-with a C-terminal TM segment(in) + ADP + phosphate + H(+). In terms of biological role, endoplasmic reticulum translocase required to remove mitochondrial transmembrane proteins mistargeted to the endoplasmic reticulum. Acts as a dislocase that mediates the ATP-dependent extraction of mislocalized mitochondrial transmembrane proteins from the endoplasmic reticulum membrane. Specifically binds mitochondrial tail-anchored transmembrane proteins: has an atypically large substrate-binding pocket that recognizes and binds moderately hydrophobic transmembranes with short hydrophilic lumenal domains. Involved in controlling nuclear calcium ion levels. Required for cytokinesis and stabilizing microtubules. Required for assembly of the forespore membrane. Involved in calcium transport to the endoplasmic reticulum. The polypeptide is Endoplasmic reticulum transmembrane helix translocase (Schizosaccharomyces pombe (strain 972 / ATCC 24843) (Fission yeast)).